A 2039-amino-acid chain; its full sequence is Calcium-channel protein CCH1 (2039 aa).

Disordered stretches follow at residues 1 to 171 (MQGR…PPRS) and 206 to 288 (PQLK…PQKE). Over residues 64–80 (STEEKKGDEYNGNDKDS) the composition is skewed to basic and acidic residues. Asn-98 carries N-linked (GlcNAc...) asparagine glycosylation. Composition is skewed to low complexity over residues 122 to 132 (SPSTKSAKSSS) and 147 to 164 (FSSYSRSSSRRVSNSPSS). Residues 209-226 (KSEKSRPVSDVGEDRGEG) show a composition bias toward basic and acidic residues. Asn-257 and Asn-269 each carry an N-linked (GlcNAc...) asparagine glycan. The span at 271 to 281 (SRKKPSPKFFH) shows a compositional bias: basic residues. Position 284 is a phosphoserine (Ser-284). A helical membrane pass occupies residues 346-366 (YSLLYNTLLTFYAILLAIRTY). Residue Asn-379 is glycosylated (N-linked (GlcNAc...) asparagine). A helical membrane pass occupies residues 384–404 (FIFILSACFTGNDIAKIIAFG). Residue Asn-559 is glycosylated (N-linked (GlcNAc...) asparagine). Helical transmembrane passes span 563–583 (MLVYFWIFFGILGVQIFQGSF), 658–678 (IVNSMELVFVIMSANTFTDLM), and 691–711 (LFFIVCIFVLTIWLLNLLIAV). 2 N-linked (GlcNAc...) asparagine glycosylation sites follow: Asn-754 and Asn-760. Transmembrane regions (helical) follow at residues 766–786 (LAIYSHVEFIFVILIICDIGM), 809–829 (ISIVLFIESLARLVLYLPNMW), and 841–861 (FIISIITLVISCLAVEGVLGH). Residues Asn-882 and Asn-900 are each glycosylated (N-linked (GlcNAc...) asparagine). Transmembrane regions (helical) follow at residues 904 to 924 (FYFFFTFLVAIIMAVYFEGVI) and 942 to 962 (SFLSLFIIGSTENWTDILYAL). Asn-968 carries an N-linked (GlcNAc...) asparagine glycan. The chain crosses the membrane as a helical span at residues 978 to 998 (FFIIWFLLSNSVILNIFIALI). Asn-1153 carries N-linked (GlcNAc...) asparagine glycosylation. The chain crosses the membrane as a helical span at residues 1207–1227 (VFVFIFALATILLIVCSCYVT). The N-linked (GlcNAc...) asparagine glycan is linked to Asn-1240. The next 2 membrane-spanning stretches (helical) occupy residues 1247–1267 (CAFIGAFSIEFIVKTVADGFI) and 1277–1297 (PWNFIDFCVLISMWINLIAYL). An N-linked (GlcNAc...) asparagine glycan is attached at Asn-1302. Helical transmembrane passes span 1340-1360 (IFEAGLISLSLLFPFTVWGLS) and 1408-1428 (FASAFSSLYQIISLEGWVDLL). The N-linked (GlcNAc...) asparagine glycan is linked to Asn-1433. 5 helical membrane passes run 1452–1472 (FLVLFNFLSMVFILNLFVSFI), 1529–1549 (NFYYASFLQVVLYLHIIMLLS), 1554–1574 (PGNLIGYQGVYFMFSTSVFLI), 1596–1616 (IRLSIIIIAFIMNAVAFHVPA), and 1618–1638 (HYWFHNIKGFFLLVIFLFIIP). The N-linked (GlcNAc...) asparagine glycan is linked to Asn-1640. A helical transmembrane segment spans residues 1654 to 1674 (LPPILSLTYTWGVLFLVYAIA). 2 N-linked (GlcNAc...) asparagine glycosylation sites follow: Asn-1687 and Asn-1732. Residues 1748 to 1768 (LMSWNIISMYIFVNMFVSLII) traverse the membrane as a helical segment. N-linked (GlcNAc...) asparagine glycosylation is found at Asn-1770 and Asn-1785. The EF-hand domain occupies 1787–1822 (SEIKKYIEAWSKFDTDGTGELELSYLPRIMHSFDGP). A disordered region spans residues 2011–2039 (PRMNQDSTMEPPEEPIDNNDDSANDLIDR). Over residues 2021-2033 (PPEEPIDNNDDSA) the composition is skewed to acidic residues.

The protein belongs to the calcium channel alpha-1 subunit (TC 1.A.1.11) family. Interacts with MID1 to form a Ca(2+) influx channel.

The protein localises to the cell membrane. In terms of biological role, voltage-gated, high-affinity calcium channel that functions together with MID1 to mediate calcium entry into cells. Required during conditions of environmental stress. This chain is Calcium-channel protein CCH1 (CCH1), found in Saccharomyces cerevisiae (strain ATCC 204508 / S288c) (Baker's yeast).